Reading from the N-terminus, the 115-residue chain is NADH-ubiquinone oxidoreductase chain 3 (115 aa).

3 helical membrane-spanning segments follow: residues 4 to 24, 55 to 75, and 84 to 104; these read MLAMLINITLSLCLISLAFWL, FFLVGITFLLLDLEIALLLPL, and MITTTIVSLSLVSILALGLSY.

It belongs to the complex I subunit 3 family. As to quaternary structure, core subunit of respiratory chain NADH dehydrogenase (Complex I) which is composed of 45 different subunits. Interacts with TMEM186. Interacts with TMEM242.

The protein localises to the mitochondrion inner membrane. It carries out the reaction a ubiquinone + NADH + 5 H(+)(in) = a ubiquinol + NAD(+) + 4 H(+)(out). Functionally, core subunit of the mitochondrial membrane respiratory chain NADH dehydrogenase (Complex I) which catalyzes electron transfer from NADH through the respiratory chain, using ubiquinone as an electron acceptor. Essential for the catalytic activity of complex I. This chain is NADH-ubiquinone oxidoreductase chain 3, found in Reithrodon auritus (Bunny rat).